Here is a 948-residue protein sequence, read N- to C-terminus: Non-lysosomal glucosylceramidase (948 aa).

Over 1–736 the chain is Extracellular; it reads MAEPLAVETK…VMDGPSAYCS (736 aa). A compositionally biased stretch (basic and acidic residues) spans 177-195; the sequence is STRDKTSDPDGDPDGERTK. Positions 177–197 are disordered; sequence STRDKTSDPDGDPDGERTKCQ. N-linked (GlcNAc...) asparagine glycosylation is present at Asn200. The residue at position 214 (Ser214) is a Phosphoserine. N-linked (GlcNAc...) asparagine glycosylation is found at Asn288, Asn555, and Asn629. Phosphoserine is present on residues Ser667 and Ser669. N-linked (GlcNAc...) asparagine glycosylation occurs at Asn673. A helical membrane pass occupies residues 737–753; that stretch reads GLWLAALQAMSAMATIL. Topologically, residues 754-948 are cytoplasmic; the sequence is DQPNDCLRYQ…ALERRRAQRD (195 aa).

This sequence belongs to the non-lysosomal glucosylceramidase family.

The protein resides in the cell membrane. The enzyme catalyses a beta-D-glucosyl-(1&lt;-&gt;1')-N-acylsphing-4-enine + H2O = an N-acylsphing-4-enine + D-glucose. Its function is as follows. Non-lysosomal glucosylceramidase that catalyzes the conversion of glucosylceramide to free glucose and ceramide. This is Non-lysosomal glucosylceramidase from Drosophila melanogaster (Fruit fly).